Here is a 156-residue protein sequence, read N- to C-terminus: MKLIVIAVGNRMPAWVETAWDDYAKRLPPDCALELREIKPEPRTTGKTPAQMMAAEARRIEAAIPGGALRLALDERGRDLTTMALSQRLEQWRAGGRDVVFLVGGPDGLDDALKSACDGQIRLSSLTLPHPMVRVVLAEQLYRAWAILANHPYHRA.

S-adenosyl-L-methionine contacts are provided by residues leucine 73, glycine 104, and 123 to 128 (LSSLTL).

The protein belongs to the RNA methyltransferase RlmH family. Homodimer.

It localises to the cytoplasm. It catalyses the reaction pseudouridine(1915) in 23S rRNA + S-adenosyl-L-methionine = N(3)-methylpseudouridine(1915) in 23S rRNA + S-adenosyl-L-homocysteine + H(+). Functionally, specifically methylates the pseudouridine at position 1915 (m3Psi1915) in 23S rRNA. The polypeptide is Ribosomal RNA large subunit methyltransferase H (Bordetella petrii (strain ATCC BAA-461 / DSM 12804 / CCUG 43448)).